The following is a 580-amino-acid chain: Rho guanine nucleotide exchange factor 25 (580 aa).

Residues 48–67 are compositionally biased toward low complexity; sequence AASGLAAPSGPSSGLSSGPC. Disordered stretches follow at residues 48–76 and 128–157; these read AASG…GPVS and LEGP…KKKA. Residues 160–336 enclose the DH domain; sequence RSMYVLSELV…CFVPKRCNDM (177 aa). Residues 278–299 are important for binding to Rho GTPases; it reads LGHRLQLNDLLIKPVQRIMKYQ. A PH domain is found at 348 to 466; it reads KLTAQGKLLG…WIKHVAQILE (119 aa). Residues 467–493 form a sufficient to bind activated GNAQ region; the sequence is SQRDFLNALQSPIEYQRRESQTNSLGR. Disordered stretches follow at residues 482-524 and 545-580; these read QRRE…GSLP and ALGD…EDEL. Polar residues predominate over residues 509–520; the sequence is DQAQGSTHTPIN. The span at 555–566 shows a compositional bias: pro residues; sequence DSPPVSPTPKTP.

Interacts (via the DH domain) with POPDC1 (via the C-terminus cytoplasmic tail). Interacts with activated GNAQ and GNA11. Interacts with RHOA, CDC42 and RAC1. In terms of tissue distribution, isoform 1 and isoform 2 are highly expressed in excitable tissues, such as brain, heart and muscle. Also detected in kidney and liver.

The protein localises to the cell membrane. It localises to the cytoplasm. The protein resides in the myofibril. It is found in the sarcomere. May play a role in actin cytoskeleton reorganization in different tissues since its activation induces formation of actin stress fibers. It works as a guanine nucleotide exchange factor for Rho family of small GTPases. Links specifically G alpha q/11-coupled receptors to RHOA activation. May be an important regulator of processes involved in axon and dendrite formation. In neurons seems to be an exchange factor primarily for RAC1. Involved in skeletal myogenesis. This chain is Rho guanine nucleotide exchange factor 25 (ARHGEF25), found in Homo sapiens (Human).